The sequence spans 831 residues: Heat shock 70 kDa protein 14 (831 aa).

Disordered stretches follow at residues 503–579 (EEVE…KKKV) and 786–831 (TKPK…EGST). Over residues 509 to 526 (VTKEHSEETTKMDSDKAS) the composition is skewed to basic and acidic residues. Phosphoserine is present on Ser533.

The protein belongs to the heat shock protein 70 (TC 1.A.33) family. HSP110/SSE subfamily. As to quaternary structure, interacts with HTT1 in both cytoplasm and nucleus. Constitutively expressed.

It localises to the cytoplasm. The protein localises to the nucleus. In cooperation with other chaperones, Hsp70s are key components that facilitate folding of de novo synthesized proteins, assist translocation of precursor proteins into organelles, and are responsible for degradation of damaged protein under stress conditions. The polypeptide is Heat shock 70 kDa protein 14 (HSP70-14) (Arabidopsis thaliana (Mouse-ear cress)).